We begin with the raw amino-acid sequence, 295 residues long: Bifunctional protein FolD (295 aa).

NADP(+) contacts are provided by residues 165-167 (GRG), S192, and I233.

It belongs to the tetrahydrofolate dehydrogenase/cyclohydrolase family. As to quaternary structure, homodimer.

It catalyses the reaction (6R)-5,10-methylene-5,6,7,8-tetrahydrofolate + NADP(+) = (6R)-5,10-methenyltetrahydrofolate + NADPH. The enzyme catalyses (6R)-5,10-methenyltetrahydrofolate + H2O = (6R)-10-formyltetrahydrofolate + H(+). The protein operates within one-carbon metabolism; tetrahydrofolate interconversion. Functionally, catalyzes the oxidation of 5,10-methylenetetrahydrofolate to 5,10-methenyltetrahydrofolate and then the hydrolysis of 5,10-methenyltetrahydrofolate to 10-formyltetrahydrofolate. In Tropheryma whipplei (strain Twist) (Whipple's bacillus), this protein is Bifunctional protein FolD.